The primary structure comprises 335 residues: Glycerol-3-phosphate dehydrogenase [NAD(P)+] (335 aa).

Residues S15, Y16, R36, and K110 each coordinate NADPH. Sn-glycerol 3-phosphate-binding residues include K110, G139, and T141. A143 provides a ligand contact to NADPH. 5 residues coordinate sn-glycerol 3-phosphate: K195, D248, S258, R259, and N260. K195 serves as the catalytic Proton acceptor. NADPH is bound at residue R259. Residues V283 and E285 each contribute to the NADPH site.

It belongs to the NAD-dependent glycerol-3-phosphate dehydrogenase family.

The protein resides in the cytoplasm. The catalysed reaction is sn-glycerol 3-phosphate + NAD(+) = dihydroxyacetone phosphate + NADH + H(+). The enzyme catalyses sn-glycerol 3-phosphate + NADP(+) = dihydroxyacetone phosphate + NADPH + H(+). Its pathway is membrane lipid metabolism; glycerophospholipid metabolism. Its function is as follows. Catalyzes the reduction of the glycolytic intermediate dihydroxyacetone phosphate (DHAP) to sn-glycerol 3-phosphate (G3P), the key precursor for phospholipid synthesis. This chain is Glycerol-3-phosphate dehydrogenase [NAD(P)+], found in Pseudoalteromonas translucida (strain TAC 125).